The primary structure comprises 921 residues: Isoleucine--tRNA ligase (921 aa).

Residues 57–67 (PYANGELHMGH) carry the 'HIGH' region motif. Glu552 serves as a coordination point for L-isoleucyl-5'-AMP. The 'KMSKS' region motif lies at 593 to 597 (KMSKS). Lys596 contributes to the ATP binding site. Zn(2+) contacts are provided by Cys888, Cys891, Cys908, and Cys911.

This sequence belongs to the class-I aminoacyl-tRNA synthetase family. IleS type 1 subfamily. Monomer. It depends on Zn(2+) as a cofactor.

It localises to the cytoplasm. The enzyme catalyses tRNA(Ile) + L-isoleucine + ATP = L-isoleucyl-tRNA(Ile) + AMP + diphosphate. In terms of biological role, catalyzes the attachment of isoleucine to tRNA(Ile). As IleRS can inadvertently accommodate and process structurally similar amino acids such as valine, to avoid such errors it has two additional distinct tRNA(Ile)-dependent editing activities. One activity is designated as 'pretransfer' editing and involves the hydrolysis of activated Val-AMP. The other activity is designated 'posttransfer' editing and involves deacylation of mischarged Val-tRNA(Ile). The sequence is that of Isoleucine--tRNA ligase from Listeria monocytogenes serovar 1/2a (strain ATCC BAA-679 / EGD-e).